A 368-amino-acid polypeptide reads, in one-letter code: Apolipoprotein A-V (368 aa).

The N-terminal stretch at 1 to 20 (MAAVITWALALLAVFASTQA) is a signal peptide. Residue Ser52 is modified to Phosphoserine. Residues 231 to 255 (TRKAKDLHTSIQRNLDQLRDELSAF) adopt a coiled-coil conformation. Positions 305 to 333 (EEIQHQLAPPPPSHSAFAPELGHSDSNKA) are disordered.

Belongs to the apolipoprotein A1/A4/E family. As to quaternary structure, interacts with GPIHBP1. Interacts with SORL1; this interaction leads to APOA5 internalization and sorting either to lysosomes and degradation, or to the trans-Golgi network. Phosphorylated by FAM20C in the extracellular medium. As to expression, liver.

Its subcellular location is the secreted. It is found in the early endosome. The protein localises to the late endosome. The protein resides in the golgi apparatus. It localises to the trans-Golgi network. In terms of biological role, minor apolipoprotein mainly associated with HDL and to a lesser extent with VLDL. May also be associated with chylomicrons. Important determinant of plasma triglyceride (TG) levels by both being a potent stimulator of apo-CII lipoprotein lipase (LPL) TG hydrolysis and an inhibitor of the hepatic VLDL-TG production rate (without affecting the VLDL-apoB production rate). Activates poorly lecithin:cholesterol acyltransferase (LCAT) and does not enhance efflux of cholesterol from macrophages. Binds heparin. This Mus musculus (Mouse) protein is Apolipoprotein A-V (Apoa5).